The chain runs to 238 residues: MGKRLMSQNRGKGSPTYRATSSRFKADLEHIKTFGDETIEGIITEVVHDPARNCPIIRVKFGNGEERLILAPEGVGVGDKIACGISAEIKPGNTLPLSEIPEGCAICNIESQPGDGGAFARSSGVYAIIVAHEGKKTVVQMPSGEIKRLNPKCRATIGVVAGGGRTEKPFVRAGNKWYKMANKATKWPVVRGVAMNAVDHPFGGGGRQHPGRPKTVSRNTPPGRKVGSIAARRTGVGH.

Residues 201–238 (PFGGGGRQHPGRPKTVSRNTPPGRKVGSIAARRTGVGH) form a disordered region.

Belongs to the universal ribosomal protein uL2 family. As to quaternary structure, part of the 50S ribosomal subunit. Forms a bridge to the 30S subunit in the 70S ribosome.

In terms of biological role, one of the primary rRNA binding proteins. Required for association of the 30S and 50S subunits to form the 70S ribosome, for tRNA binding and peptide bond formation. It has been suggested to have peptidyltransferase activity; this is somewhat controversial. Makes several contacts with the 16S rRNA in the 70S ribosome. This chain is Large ribosomal subunit protein uL2, found in Methanocella arvoryzae (strain DSM 22066 / NBRC 105507 / MRE50).